A 228-amino-acid chain; its full sequence is uncharacterized protein (228 aa).

21–28 (GMIALGKT) is a binding site for ATP.

This is an uncharacterized protein from Mycoplasma genitalium (strain ATCC 33530 / DSM 19775 / NCTC 10195 / G37) (Mycoplasmoides genitalium).